The following is a 174-amino-acid chain: Regulator of G-protein signaling 8 (174 aa).

Residues 46–162 (SFDILLSNKY…IRSKIYQDLL (117 aa)) form the RGS domain.

The protein resides in the cell membrane. It localises to the membrane. Its subcellular location is the perikaryon. It is found in the cell projection. The protein localises to the dendrite. The protein resides in the nucleus. Functionally, regulates G protein-coupled receptor signaling cascades, including signaling via muscarinic acetylcholine receptors and dopamine receptors. Inhibits signal transduction by increasing the GTPase activity of G protein alpha subunits, thereby driving them into their inactive GDP-bound form. Modulates the activity of potassium channels that are activated in response to G protein-coupled receptor signaling. The polypeptide is Regulator of G-protein signaling 8 (rgs8) (Danio rerio (Zebrafish)).